A 486-amino-acid chain; its full sequence is Protein nucleotidyltransferase YdiU (486 aa).

ATP-binding residues include glycine 90, glycine 92, arginine 93, lysine 113, aspartate 125, glycine 126, arginine 176, and arginine 183. Residue aspartate 252 is the Proton acceptor of the active site. The Mg(2+) site is built by asparagine 253 and aspartate 262. Residue aspartate 262 coordinates ATP.

It belongs to the SELO family. Mg(2+) is required as a cofactor. Mn(2+) serves as cofactor.

The catalysed reaction is L-seryl-[protein] + ATP = 3-O-(5'-adenylyl)-L-seryl-[protein] + diphosphate. It catalyses the reaction L-threonyl-[protein] + ATP = 3-O-(5'-adenylyl)-L-threonyl-[protein] + diphosphate. It carries out the reaction L-tyrosyl-[protein] + ATP = O-(5'-adenylyl)-L-tyrosyl-[protein] + diphosphate. The enzyme catalyses L-histidyl-[protein] + UTP = N(tele)-(5'-uridylyl)-L-histidyl-[protein] + diphosphate. The catalysed reaction is L-seryl-[protein] + UTP = O-(5'-uridylyl)-L-seryl-[protein] + diphosphate. It catalyses the reaction L-tyrosyl-[protein] + UTP = O-(5'-uridylyl)-L-tyrosyl-[protein] + diphosphate. Functionally, nucleotidyltransferase involved in the post-translational modification of proteins. It can catalyze the addition of adenosine monophosphate (AMP) or uridine monophosphate (UMP) to a protein, resulting in modifications known as AMPylation and UMPylation. This Pseudomonas putida (strain ATCC 47054 / DSM 6125 / CFBP 8728 / NCIMB 11950 / KT2440) protein is Protein nucleotidyltransferase YdiU.